A 169-amino-acid chain; its full sequence is MAANGSNVVSRGAVRFTEEQEALVLKSWAIMKNDSAHIGHRFFLKIFEVAPSARQLFSFLRNSDVPLEKNPKLKIHAMAVFVMTCEAAAQLRKTGRVTVRDTTIKRLGSTHFKNGVSDAHFEVAKFALLETIKEAVPASMWSPAMKGAWGEAYDHLVAAIKQGMKPAAA.

In terms of domain architecture, Globin spans Arg-15–Lys-165. Residues Glu-48–Ser-52 carry the Homodimerization motif. Positions 58, 72, 76, 106, 110, and 111 each coordinate heme b. The short motif at Asp-118–Glu-130 is the Homodimerization element.

It belongs to the plant globin family. In terms of assembly, homodimer. It depends on heme b as a cofactor.

The protein localises to the cytoplasm. It localises to the nucleus. The enzyme catalyses Fe(III)-heme b-[protein] + nitric oxide + H2O = Fe(II)-heme b-[protein] + nitrite + 2 H(+). Functionally, phytoglobin that reduces nitrite to nitric oxide under anoxic conditions (e.g. during flooding or in waterlogged soil). May not function as an oxygen storage or transport protein. Has an unusually high affinity for O(2) through an hexacoordinate heme iron because of a very low dissociation constant. This is Anaerobic nitrite reductase NSHB3 from Oryza sativa subsp. indica (Rice).